Here is a 23-residue protein sequence, read N- to C-terminus: Protein NS0 (23 aa).

Its function is as follows. May play a role inhost modulation. Is not involved in viral protein synthesis or DNA replication. This is Protein NS0 (NS0) from Porcine circovirus 2 (PCV2).